Reading from the N-terminus, the 400-residue chain is Zinc finger CCHC domain-containing protein 3 (400 aa).

A disordered region spans residues 1 to 157; it reads MATGGGAEEE…LQDEPPAAGP (157 aa). Basic and acidic residues-rich tracts occupy residues 26 to 38 and 47 to 63; these read ARVE…REKM and LAEK…RDET. Residues 66–75 are compositionally biased toward gly residues; sequence GASGGLGSPG. A compositionally biased stretch (basic and acidic residues) spans 91-109; that stretch reads GDPKGRRRDPTGEASDAYR. Residue Y198 is modified to Phosphotyrosine. 2 consecutive CCHC-type zinc fingers follow at residues 349-365 and 369-384; these read RCFR…YCRK and CNLC…QCPK.

In terms of assembly, interacts with CGAS. Interacts with RIGI. Interacts with IFIH1/MDA5.

It localises to the cytoplasm. Nucleic acid-binding protein involved in innate immune response to DNA and RNA viruses. Binds DNA and RNA in the cytoplasm and acts by promoting recognition of viral nucleic acids by virus sensors, such as RIGI, IFIH1/MDA5 and CGAS. Acts as a co-sensor for recognition of double-stranded DNA (dsDNA) by cGAS in the cytoplasm, thereby playing a role in innate immune response to cytosolic dsDNA and DNA virus. Binds dsDNA and probably acts by promoting sensing of dsDNA by CGAS, leading to enhance CGAS oligomerization and activation. Promotes sensing of viral RNA by RIG-I-like receptors proteins RIGI and IFIH1/MDA5 via two mechanisms: binds double-stranded RNA (dsRNA), enhancing the binding of RIGI and IFIH1/MDA5 to dsRNA and promotes 'Lys-63'-linked ubiquitination and subsequent activation of RIGI and IFIH1/MDA5. In Mus musculus (Mouse), this protein is Zinc finger CCHC domain-containing protein 3.